Reading from the N-terminus, the 341-residue chain is Glucokinase (341 aa).

ATP is bound at residue 18 to 23 (GDIGGT).

Belongs to the bacterial glucokinase family.

It is found in the cytoplasm. It carries out the reaction D-glucose + ATP = D-glucose 6-phosphate + ADP + H(+). The protein is Glucokinase of Rhizobium leguminosarum bv. trifolii (strain WSM2304).